Consider the following 395-residue polypeptide: Elongation factor Tu (395 aa).

Residues 10–204 (KPHVNIGTIG…TVDEYIPTPQ (195 aa)) form the tr-type G domain. The tract at residues 19–26 (GHVDHGKT) is G1. 19–26 (GHVDHGKT) lines the GTP pocket. Thr26 contacts Mg(2+). Residues 60-64 (GITIN) are G2. Residues 81 to 84 (DAPG) are G3. GTP-binding positions include 81-85 (DAPGH) and 136-139 (NKCD). Residues 136-139 (NKCD) form a G4 region. The tract at residues 174–176 (SAL) is G5.

It belongs to the TRAFAC class translation factor GTPase superfamily. Classic translation factor GTPase family. EF-Tu/EF-1A subfamily. In terms of assembly, monomer.

The protein resides in the cytoplasm. It catalyses the reaction GTP + H2O = GDP + phosphate + H(+). GTP hydrolase that promotes the GTP-dependent binding of aminoacyl-tRNA to the A-site of ribosomes during protein biosynthesis. The protein is Elongation factor Tu of Ligilactobacillus salivarius (strain UCC118) (Lactobacillus salivarius).